We begin with the raw amino-acid sequence, 378 residues long: uncharacterized protein (378 aa).

Positions 208-317 (GIGFADLSSF…NPVNLAARLV (110 aa)) constitute a Guanylate cyclase domain.

The protein belongs to the adenylyl cyclase class-4/guanylyl cyclase family.

This is an uncharacterized protein from Mycobacterium bovis (strain ATCC BAA-935 / AF2122/97).